Here is a 494-residue protein sequence, read N- to C-terminus: DNA-directed DNA/RNA polymerase mu (494 aa).

Residues 1–24 (MLPKRRRARVGSPSGDAASSTPPS) are disordered. Phosphoserine is present on Ser-12. One can recognise a BRCT domain in the interval 22–122 (PPSTRFPGVA…QPVPVECRHR (101 aa)). The interval 323 to 332 (RGKLQGHDVD) is involved in ssDNA binding. Residues Asp-330, Asp-332, and Asp-418 each contribute to the Mg(2+) site.

This sequence belongs to the DNA polymerase type-X family. Mg(2+) serves as cofactor. As to expression, expressed in a number of tissues. Abundant in thymus.

It localises to the nucleus. It carries out the reaction DNA(n) + a 2'-deoxyribonucleoside 5'-triphosphate = DNA(n+1) + diphosphate. Its function is as follows. Gap-filling polymerase involved in repair of DNA double-strand breaks by non-homologous end joining (NHEJ). Participates in immunoglobulin (Ig) light chain gene rearrangement in V(D)J recombination. The chain is DNA-directed DNA/RNA polymerase mu (POLM) from Homo sapiens (Human).